We begin with the raw amino-acid sequence, 607 residues long: Glutamine--fructose-6-phosphate aminotransferase [isomerizing] (607 aa).

C2 acts as the Nucleophile; for GATase activity in catalysis. The Glutamine amidotransferase type-2 domain maps to 2–217 (CGIIGILGKK…DGDWAVLTRE (216 aa)). SIS domains are found at residues 277 to 422 (TVRS…QRGS) and 455 to 597 (ICRD…VDQP). The For Fru-6P isomerization activity role is filled by K602.

In terms of assembly, homodimer.

Its subcellular location is the cytoplasm. The enzyme catalyses D-fructose 6-phosphate + L-glutamine = D-glucosamine 6-phosphate + L-glutamate. Its function is as follows. Catalyzes the first step in hexosamine metabolism, converting fructose-6P into glucosamine-6P using glutamine as a nitrogen source. The sequence is that of Glutamine--fructose-6-phosphate aminotransferase [isomerizing] from Bartonella quintana (strain Toulouse) (Rochalimaea quintana).